The sequence spans 100 residues: UPF0213 protein YhbQ (100 aa).

The GIY-YIG domain maps to 2–77; the sequence is TPWFLYLIRT…KQLTKRQKER (76 aa).

Belongs to the UPF0213 family.

The protein is UPF0213 protein YhbQ of Escherichia coli O7:K1 (strain IAI39 / ExPEC).